The sequence spans 392 residues: GDP-mannose transporter (392 aa).

Basic and acidic residues predominate over residues 1-11 (MDDKKNEDLEM). A disordered region spans residues 1-25 (MDDKKNEDLEMRNFNGRSSPSQRDP). Topologically, residues 1 to 45 (MDDKKNEDLEMRNFNGRSSPSQRDPFLAKPGAAAKRGNSAFDLSN) are cytoplasmic. Residues 46-66 (VTNSPGISILAYCLASISMTV) traverse the membrane as a helical segment. The Lumenal portion of the chain corresponds to 67–76 (TNKYCVSGSN). The helical transmembrane segment at 77 to 97 (WNLNFFYLAIQSVVCIIAIII) threads the bilayer. The Cytoplasmic segment spans residues 98–116 (CKQAGLITNLAPFDTKKAK). Residues 117–139 (TWFPISLLLVGMIYTSTKALQFL) form a helical membrane-spanning segment. At 140 to 142 (SVP) the chain is on the lumenal side. A helical membrane pass occupies residues 143 to 165 (VYTIFKNLTIIVIAYGEVLWFGG). At 166–171 (SVTPSA) the chain is on the cytoplasmic side. The chain crosses the membrane as a helical span at residues 172–191 (LFSFGLMVLSSVVAAWADIQ). The Lumenal segment spans residues 192 to 210 (HALYGGGAAQSAEAAAALS). Residues 211-231 (TLNAGYAWMGMNVFCTAAYVL) form a helical membrane-spanning segment. Topologically, residues 232-246 (SMRKVIKKMNFKDWD) are cytoplasmic. A helical transmembrane segment spans residues 247 to 267 (TMFYNNLLTIPVLFVCSFIFE). N-linked (GlcNAc...) asparagine glycans are attached at residues Asn268 and Asn273. Over 268–285 (NWSSENLTKNFPLETRNN) the chain is Lumenal. The helical transmembrane segment at 286 to 306 (LILGMIYSGLATIFISYCSAW) threads the bilayer. Residues 307 to 314 (CIRVTSST) are Cytoplasmic-facing. The chain crosses the membrane as a helical span at residues 315–337 (TYSMVGALNKLPIAVSGLVFFAA). At 338-340 (PVT) the chain is on the lumenal side. Residues 341–360 (FGSVSAIFIGFVSGIVYAWA) form a helical membrane-spanning segment. Residues 361-392 (KVRQNQSKGNILPTTQPVMSASSQSNRDAAKA) are Cytoplasmic-facing. Positions 373 to 392 (PTTQPVMSASSQSNRDAAKA) are disordered.

Belongs to the TPT transporter family. SLC35D subfamily. As to quaternary structure, homooligomer.

The protein resides in the golgi apparatus membrane. It localises to the cytoplasmic vesicle membrane. It is found in the endoplasmic reticulum membrane. Functionally, involved in the import of GDP-mannose from the cytoplasm into the Golgi lumen. The sequence is that of GDP-mannose transporter (gmt1) from Botryotinia fuckeliana (strain B05.10) (Noble rot fungus).